Here is a 372-residue protein sequence, read N- to C-terminus: tRNA-specific 2-thiouridylase MnmA (372 aa).

ATP-binding positions include 16-23 (GMSGGVDS) and Met-42. Residues 102 to 104 (NPD) are interaction with target base in tRNA. The active-site Nucleophile is the Cys-107. Residues Cys-107 and Cys-205 are joined by a disulfide bond. ATP is bound at residue Gly-132. The interaction with tRNA stretch occupies residues 155–157 (KDQ). Cys-205 serves as the catalytic Cysteine persulfide intermediate. Residues 317–318 (RY) are interaction with tRNA.

The protein belongs to the MnmA/TRMU family.

It localises to the cytoplasm. It carries out the reaction S-sulfanyl-L-cysteinyl-[protein] + uridine(34) in tRNA + AH2 + ATP = 2-thiouridine(34) in tRNA + L-cysteinyl-[protein] + A + AMP + diphosphate + H(+). Functionally, catalyzes the 2-thiolation of uridine at the wobble position (U34) of tRNA, leading to the formation of s(2)U34. This is tRNA-specific 2-thiouridylase MnmA from Shewanella sp. (strain ANA-3).